We begin with the raw amino-acid sequence, 315 residues long: Probable cell division protein WhiA (315 aa).

The segment at residues Ser278–His312 is a DNA-binding region (H-T-H motif).

It belongs to the WhiA family.

Its function is as follows. Involved in cell division and chromosome segregation. In Oenococcus oeni (strain ATCC BAA-331 / PSU-1), this protein is Probable cell division protein WhiA.